Reading from the N-terminus, the 207-residue chain is LexA repressor (207 aa).

Residues 28-48 (VREIGEAVGLASSSTVHGHLS) constitute a DNA-binding region (H-T-H motif). Active-site for autocatalytic cleavage activity residues include serine 130 and lysine 168.

Belongs to the peptidase S24 family. In terms of assembly, homodimer.

The enzyme catalyses Hydrolysis of Ala-|-Gly bond in repressor LexA.. In terms of biological role, represses a number of genes involved in the response to DNA damage (SOS response), including recA and lexA. In the presence of single-stranded DNA, RecA interacts with LexA causing an autocatalytic cleavage which disrupts the DNA-binding part of LexA, leading to derepression of the SOS regulon and eventually DNA repair. The polypeptide is LexA repressor (Staphylococcus aureus (strain Mu3 / ATCC 700698)).